Reading from the N-terminus, the 320-residue chain is Cytochrome f (320 aa).

The signal sequence occupies residues 1 to 35 (MQTRNTFSSIKEEITRSISVSLMIYIITWAPVSNA). Residues Tyr-36, Cys-56, Cys-59, and His-60 each coordinate heme. A helical transmembrane segment spans residues 286-306 (VQGLLFFFASVILAQIFLVLK).

Belongs to the cytochrome f family. As to quaternary structure, the 4 large subunits of the cytochrome b6-f complex are cytochrome b6, subunit IV (17 kDa polypeptide, petD), cytochrome f and the Rieske protein, while the 4 small subunits are PetG, PetL, PetM and PetN. The complex functions as a dimer. Requires heme as cofactor.

The protein resides in the plastid. The protein localises to the chloroplast thylakoid membrane. Functionally, component of the cytochrome b6-f complex, which mediates electron transfer between photosystem II (PSII) and photosystem I (PSI), cyclic electron flow around PSI, and state transitions. In Cucumis sativus (Cucumber), this protein is Cytochrome f.